Here is a 1196-residue protein sequence, read N- to C-terminus: MAAPAAGSGPGGSSGGITGGAGGSLGVVGPSTSTSSVNPFLSDSEEEEDGGEEEEEEEEDDNEEDDEDVSPLNERPAASLASRYLQDEADSTLLPSAGPRLCLQPGEPGRVPLDAVAAQLLRDQLLLTALELHTELLESGRELPRLRDYFSNPGNFERATAAPPGFGGNTTASTGGQLNRAGSISTLDSLDFARYSDDGNRETDERVAENEVPLQERKNYKSSPEIQEPIKPLEKRALNFLVNEYLLKNNNKLTSITFSDENDDQDFELWDDVGLNTPKPPDLLQLYRNLSNHQTVSKDVADIAVGVIEGDLEPIQAVKQIAPDSHISQQAAIIKELEDKIILCNNEKAALLEQIGNLERQIESLQKENSASGVCSAAPPTSDRLQSQTSEESDHYIDIQITDSDAKCEGTEERLPFQQSECEPVCQVSEDIPPSPELAKIRKTTLLSAPPSKAGVHFDKPNRKLSPAFHQALLSFCRMSADSRLGSEVSQIADSENGVMKMLGRCLPHIVPNVLLAKREELIPLILCTACLHPESKERDQLLHILFNLIKRPDDEQRQMILTGCVAFARHVGPTRVEAELLPQCWEQINHKYPERRLLVAESCGDLAPYLPKEIRSSLVLAMLQQMLMEDKADMVREAVIKSLGIIMGYIDDPDKYSQGFELLLTALGDPSERVVSATHQVFLPAYAAWTMELGNLQSHLIPTLLSKIEKLLKEGEHGLDEHKLHMYLSALQSLIPSLFATVLQNAPFTSKAKLQGEVPQIEVTRFPRPVSPLQDVATIIGSREQLAVLLQLYDYQLEHEGTTGWESLLWVVNQLLPQLIEIVGRITVTSTASVHEFSRFFWRLCRTFGKIFTNTKVKPQFQEILRLSEENIDSTAGNGVLTKATVPIYATGVLTCYNQEEDRKLLVGFLEDVMTMLSLSHAPLDSLKASFVELGTNPAYHELLLTVLWYGVVHTSALVRCTAARMFELLVKGVNETLVAQRVVPALITLSSDPEISVRIATVPAFGTIMETVTQRELLERVKMQLASFLEDPQYQDQHSLQTEIIRTFGRVGPNAEPRFRDDFVLPHLHKLSFVNNQQSVDSKRLDIATHLFEAYSALSCCFISEELMMNHFLPGLRCLRTDMEQLSPEHEVILSSMIKECEQKVENKTVQEPQGSMSIAASLVSEDTKTKFLNKMGQLTTSGAMLANVFQRKK.

Disordered regions lie at residues 1–73 (MAAP…SPLN), 159–180 (ATAA…QLNR), and 195–225 (YSDD…SSPE). Over residues 8-26 (SGPGGSSGGITGGAGGSLG) the composition is skewed to gly residues. The segment covering 27–37 (VVGPSTSTSSV) has biased composition (low complexity). Over residues 43–69 (DSEEEEDGGEEEEEEEEDDNEEDDEDV) the composition is skewed to acidic residues. The segment covering 169–180 (NTTASTGGQLNR) has biased composition (polar residues). The span at 195 to 219 (YSDDGNRETDERVAENEVPLQERKN) shows a compositional bias: basic and acidic residues. In terms of domain architecture, LisH spans 234 to 266 (EKRALNFLVNEYLLKNNNKLTSITFSDENDDQD). Residues 333–374 (IIKELEDKIILCNNEKAALLEQIGNLERQIESLQKENSASGV) adopt a coiled-coil conformation. Residues 370–393 (SASGVCSAAPPTSDRLQSQTSEES) are disordered. HEAT repeat units lie at residues 620 to 659 (VLAM…KYSQ) and 984 to 1022 (VVPA…LLER).

The protein localises to the recycling endosome. The protein resides in the golgi apparatus. It is found in the trans-Golgi network. May regulate intracellular cholesterol transport. This Xenopus tropicalis (Western clawed frog) protein is RAB11-binding protein RELCH homolog (relch).